Consider the following 251-residue polypeptide: MSGHSKWATTKHKKAAIDAKRGKLFAKLIKNIEVAARTGGGDPEGNPTLYDAIQKAKKSSVPNDNIERARKRGAGEEAGGADWQTIMYEGYGPNGVAVLIECLTDNRNRAAGEVRVAMTRNGGNMADPGSVAYLFHRKGIVTLEKNGLSEDDVLMAVLDAGAEEVNDLGESFEIISEPGDLVAVRSALQSAGIDYESAESGFQPSVSVAVDAEGARKVFKLIDALEDSDDVQNVYTNVDVSDEVLAQLDTD.

Belongs to the TACO1 family.

Its subcellular location is the cytoplasm. This chain is Probable transcriptional regulatory protein NFA_37020, found in Nocardia farcinica (strain IFM 10152).